The chain runs to 173 residues: N-alpha-acetyltransferase 20 (173 aa).

The N-acetyltransferase domain occupies 2-151 (TTIRRFVCDD…DALDMRKALP (150 aa)).

Belongs to the acetyltransferase family. ARD1 subfamily.

Seems to be involved in N-acetylation. The sequence is that of N-alpha-acetyltransferase 20 (nat5) from Dictyostelium discoideum (Social amoeba).